The chain runs to 281 residues: ATP phosphoribosyltransferase (281 aa).

This sequence belongs to the ATP phosphoribosyltransferase family. Long subfamily. Mg(2+) is required as a cofactor.

Its subcellular location is the cytoplasm. The catalysed reaction is 1-(5-phospho-beta-D-ribosyl)-ATP + diphosphate = 5-phospho-alpha-D-ribose 1-diphosphate + ATP. It participates in amino-acid biosynthesis; L-histidine biosynthesis; L-histidine from 5-phospho-alpha-D-ribose 1-diphosphate: step 1/9. Its activity is regulated as follows. Feedback inhibited by histidine. Catalyzes the condensation of ATP and 5-phosphoribose 1-diphosphate to form N'-(5'-phosphoribosyl)-ATP (PR-ATP). Has a crucial role in the pathway because the rate of histidine biosynthesis seems to be controlled primarily by regulation of HisG enzymatic activity. This is ATP phosphoribosyltransferase from Corynebacterium diphtheriae (strain ATCC 700971 / NCTC 13129 / Biotype gravis).